We begin with the raw amino-acid sequence, 98 residues long: NADH-ubiquinone oxidoreductase chain 4L (98 aa).

Helical transmembrane passes span 1–21 (MSLT…GLLM), 29–49 (SLLC…ITIL), and 61–81 (IILL…LVMV).

Belongs to the complex I subunit 4L family. As to quaternary structure, core subunit of respiratory chain NADH dehydrogenase (Complex I) which is composed of 45 different subunits.

Its subcellular location is the mitochondrion inner membrane. The enzyme catalyses a ubiquinone + NADH + 5 H(+)(in) = a ubiquinol + NAD(+) + 4 H(+)(out). Its function is as follows. Core subunit of the mitochondrial membrane respiratory chain NADH dehydrogenase (Complex I) which catalyzes electron transfer from NADH through the respiratory chain, using ubiquinone as an electron acceptor. Part of the enzyme membrane arm which is embedded in the lipid bilayer and involved in proton translocation. The protein is NADH-ubiquinone oxidoreductase chain 4L (MT-ND4L) of Artibeus jamaicensis (Jamaican fruit-eating bat).